A 366-amino-acid chain; its full sequence is Septin-1 (366 aa).

The 274-residue stretch at 22–295 (KGFDFTLMVA…EGYRARCLQS (274 aa)) folds into the Septin-type G domain. The segment at 32-39 (GESGLGKS) is G1 motif. GTP is bound by residues 32-39 (GESGLGKS), threonine 66, glycine 92, and 171-179 (KADALMPRE). A G3 motif region spans residues 89-92 (DTPG). A G4 motif region spans residues 170–173 (GKAD). Serine 206 carries the phosphoserine modification. 2 residues coordinate GTP: glycine 229 and arginine 244. Position 247 is a phosphoserine (serine 247). The residue at position 250 (threonine 250) is a Phosphothreonine. Residues serine 306 and serine 314 each carry the phosphoserine; by AURKB modification. The segment at 347–366 (EKMQAQMQQSQAQGEQSDVL) is disordered. Residues 349–366 (MQAQMQQSQAQGEQSDVL) are compositionally biased toward low complexity.

It belongs to the TRAFAC class TrmE-Era-EngA-EngB-Septin-like GTPase superfamily. Septin GTPase family. As to quaternary structure, septins polymerize into heterooligomeric protein complexes that form filaments, and can associate with cellular membranes, actin filaments and microtubules. GTPase activity is required for filament formation. Interacts with AURKB.

It is found in the cytoplasm. It localises to the cytoskeleton. The protein resides in the microtubule organizing center. The protein localises to the centrosome. Its subcellular location is the midbody. Its function is as follows. Filament-forming cytoskeletal GTPase. May play a role in cytokinesis (Potential). The polypeptide is Septin-1 (Mus musculus (Mouse)).